A 160-amino-acid polypeptide reads, in one-letter code: Phosphopantetheine adenylyltransferase (160 aa).

Residue Ser-10 coordinates substrate. Residues 10 to 11 and His-18 each bind ATP; that span reads SF. Residues Lys-42, Thr-74, and Arg-88 each coordinate substrate. Residues 89 to 91, Glu-99, and 124 to 130 contribute to the ATP site; these read GLR and FYYISSR.

The protein belongs to the bacterial CoaD family. Homohexamer. The cofactor is Mg(2+).

Its subcellular location is the cytoplasm. The enzyme catalyses (R)-4'-phosphopantetheine + ATP + H(+) = 3'-dephospho-CoA + diphosphate. It participates in cofactor biosynthesis; coenzyme A biosynthesis; CoA from (R)-pantothenate: step 4/5. Functionally, reversibly transfers an adenylyl group from ATP to 4'-phosphopantetheine, yielding dephospho-CoA (dPCoA) and pyrophosphate. The sequence is that of Phosphopantetheine adenylyltransferase from Bdellovibrio bacteriovorus (strain ATCC 15356 / DSM 50701 / NCIMB 9529 / HD100).